The chain runs to 373 residues: Innexin shaking-B (373 aa).

Residues 1 to 21 (MLDIFRGLKSLVKISHVNTDS) lie on the Cytoplasmic side of the membrane. The chain crosses the membrane as a helical span at residues 22–42 (PVFRLHYSITVIILMSFSLIV). Over 43 to 106 (TTRQYVGNPI…SAEATAADKK (64 aa)) the chain is Extracellular. Residues 107–127 (IYKYYQWVCFCLFFQAILFYT) traverse the membrane as a helical segment. Residues 128–176 (PRWLWKSWEGGKIHALMMDLDIGICSEIEKKQKKKLLLDYLWDNLRYHN) lie on the Cytoplasmic side of the membrane. The chain crosses the membrane as a helical span at residues 177 to 199 (WWAYRYYVCEFLSLCNVIGQMFL). Residues 200–268 (MNRFFDGEFM…ILPLNVVNEK (69 aa)) lie on the Extracellular side of the membrane. Residues 269–289 (IYIFLWFWFIILTILTTLTIF) traverse the membrane as a helical segment. Topologically, residues 290–373 (YRIIIIFSPR…PGMKGEIQDA (84 aa)) are cytoplasmic.

Belongs to the pannexin family. Monomer.

Its subcellular location is the cell membrane. It is found in the cell junction. The protein localises to the gap junction. Its function is as follows. Structural component of the gap junctions at electrical synapses in distal and mid-depth levels in the lamina. This Anopheles gambiae (African malaria mosquito) protein is Innexin shaking-B.